The primary structure comprises 389 residues: Major outer membrane porin (389 aa).

Belongs to the chlamydial porin (CP) (TC 1.B.2) family. Part of a disulfide cross-linked outer membrane complex (COMC) composed of the major outer membrane porin (MOMP), the small cysteine-rich protein (OmcA) and the large cysteine-rich periplasmic protein (OmcB).

It localises to the cell outer membrane. Functionally, in elementary bodies (EBs, the infectious stage, which is able to survive outside the host cell) provides the structural integrity of the outer envelope through disulfide cross-links with the small cysteine-rich protein and the large cysteine-rich periplasmic protein. It has been described in publications as the Sarkosyl-insoluble COMC (Chlamydia outer membrane complex), and serves as the functional equivalent of peptidoglycan. Its function is as follows. Permits diffusion of specific solutes through the outer membrane. This Chlamydia pneumoniae (Chlamydophila pneumoniae) protein is Major outer membrane porin (ompA).